A 701-amino-acid chain; its full sequence is Epithelial splicing regulatory protein 2 (701 aa).

RRM domains lie at 226–303 (TVIR…KATG), 327–407 (VIIR…RSTA), and 448–523 (CVRL…VEVF).

It belongs to the ESRP family.

The protein resides in the nucleus. Its function is as follows. mRNA splicing factor that regulates the formation of epithelial cell-specific isoforms. Specifically regulates the expression of FGFR2-IIIb, an epithelial cell-specific isoform of FGFR2. Acts by directly binding specific sequences in mRNAs. Binds the GU-rich sequence motifs in the ISE/ISS-3, a cis-element regulatory region present in the mRNA of FGFR2. The protein is Epithelial splicing regulatory protein 2 (ESRP2) of Gallus gallus (Chicken).